The sequence spans 485 residues: Probable alginate O-acetylase AlgI (485 aa).

Transmembrane regions (helical) follow at residues 7–24, 39–61, 78–100, 115–137, 150–172, 312–334, 360–382, 402–424, and 461–483; these read VFLF…YLSG, FYAW…NYWI, WLLL…NFGV, FILT…ISYI, NLID…VLRF, FLTM…WGAW, AFTF…HVAA, AQLT…FFGL, and ILLL…FLYF. The active site involves histidine 322.

Belongs to the membrane-bound acyltransferase family.

It is found in the cell inner membrane. Its pathway is glycan biosynthesis; alginate biosynthesis. Its function is as follows. Together with AlgJ and AlgF, forms an inner membrane complex which probably interacts with the alginate polymerization-transport complex and adds acetyl groups at the O-2 and O-3 positions of mannuronate residues. Acetylation of alginate is important for the architecture of biofilms and increases the ability of alginate to act as a defense barrier. The polypeptide is Probable alginate O-acetylase AlgI (algI) (Pseudomonas putida (strain ATCC 47054 / DSM 6125 / CFBP 8728 / NCIMB 11950 / KT2440)).